Consider the following 556-residue polypeptide: 2-succinyl-5-enolpyruvyl-6-hydroxy-3-cyclohexene-1-carboxylate synthase (556 aa).

Belongs to the TPP enzyme family. MenD subfamily. Homodimer. Mg(2+) serves as cofactor. Mn(2+) is required as a cofactor. Requires thiamine diphosphate as cofactor.

The catalysed reaction is isochorismate + 2-oxoglutarate + H(+) = 5-enolpyruvoyl-6-hydroxy-2-succinyl-cyclohex-3-ene-1-carboxylate + CO2. Its pathway is quinol/quinone metabolism; 1,4-dihydroxy-2-naphthoate biosynthesis; 1,4-dihydroxy-2-naphthoate from chorismate: step 2/7. It participates in quinol/quinone metabolism; menaquinone biosynthesis. Catalyzes the thiamine diphosphate-dependent decarboxylation of 2-oxoglutarate and the subsequent addition of the resulting succinic semialdehyde-thiamine pyrophosphate anion to isochorismate to yield 2-succinyl-5-enolpyruvyl-6-hydroxy-3-cyclohexene-1-carboxylate (SEPHCHC). The sequence is that of 2-succinyl-5-enolpyruvyl-6-hydroxy-3-cyclohexene-1-carboxylate synthase from Citrobacter koseri (strain ATCC BAA-895 / CDC 4225-83 / SGSC4696).